Consider the following 1401-residue polypeptide: Condensin complex subunit 1 (1401 aa).

Residues 1–603 (MAPQMYEFHL…TVCKNKPNMS (603 aa)) form an interactions with SMC2 and SMC4 region. 2 positions are modified to phosphoserine: Ser-20 and Ser-585. Residues 576–596 (STQEKNPRESTGNMVTGQTVC) show a composition bias toward polar residues. Disordered regions lie at residues 576–611 (STQE…SRGN), 956–978 (REEQ…TTME), and 1303–1401 (LEIG…RHRS). Positions 956–971 (REEQEHKTKDPKEKNT) are enriched in basic and acidic residues. Residues 1308–1336 (AGSQRAPSAKKPSTGSRYQPLASTASDND) show a composition bias toward polar residues. Phosphoserine occurs at positions 1310, 1315, and 1330. Thr-1331 carries the phosphothreonine modification. Residue Ser-1333 is modified to Phosphoserine. Thr-1339 is modified (phosphothreonine). The Bipartite nuclear localization signal signature appears at 1342–1362 (PRRTTRRHPNTQQRASKKKPK). The segment covering 1345–1362 (TTRRHPNTQQRASKKKPK) has biased composition (basic residues). Phosphoserine is present on residues Ser-1366, Ser-1367, Ser-1370, Ser-1371, and Ser-1376. Residues 1369 to 1382 (ESSEEDLSAEMTED) show a composition bias toward acidic residues. Phosphothreonine; by CDK1 occurs at positions 1384 and 1389. The residue at position 1395 (Ser-1395) is a Phosphoserine.

The protein belongs to the CND1 (condensin subunit 1) family. Component of the condensin complex, which contains the SMC2 and SMC4 heterodimer, and three non SMC subunits that probably regulate the complex: NCAPH/BRRN1, NCAPD2/CAPD2 and NCAPG. Interacts with histones H1 and H3. In terms of processing, phosphorylated by CDK1. Its phosphorylation, as well as that of NCAPH and NCAPG subunits, activates the condensin complex and is required for chromosome condensation.

The protein resides in the nucleus. Its subcellular location is the cytoplasm. It localises to the chromosome. Functionally, regulatory subunit of the condensin complex, a complex required for conversion of interphase chromatin into mitotic-like condense chromosomes. The condensin complex probably introduces positive supercoils into relaxed DNA in the presence of type I topoisomerases and converts nicked DNA into positive knotted forms in the presence of type II topoisomerases. May target the condensin complex to DNA via its C-terminal domain. May promote the resolution of double-strand DNA catenanes (intertwines) between sister chromatids. Condensin-mediated compaction likely increases tension in catenated sister chromatids, providing directionality for type II topoisomerase-mediated strand exchanges toward chromatid decatenation. Required for decatenation of non-centromeric ultrafine DNA bridges during anaphase. Early in neurogenesis, may play an essential role to ensure accurate mitotic chromosome condensation in neuron stem cells, ultimately affecting neuron pool and cortex size. The polypeptide is Condensin complex subunit 1 (Homo sapiens (Human)).